Here is a 434-residue protein sequence, read N- to C-terminus: Mitochondrial distribution and morphology protein 10 (434 aa).

Belongs to the MDM10 family. As to quaternary structure, component of the ER-mitochondria encounter structure (ERMES) or MDM complex, composed of mmm1, mdm10, mdm12 and mdm34. Associates with the mitochondrial outer membrane sorting assembly machinery SAM(core) complex.

It localises to the mitochondrion outer membrane. Its function is as follows. Component of the ERMES/MDM complex, which serves as a molecular tether to connect the endoplasmic reticulum and mitochondria. Components of this complex are involved in the control of mitochondrial shape and protein biogenesis and may function in phospholipid exchange. mdm10 is involved in the late assembly steps of the general translocase of the mitochondrial outer membrane (TOM complex). Functions in the tom40-specific route of the assembly of outer membrane beta-barrel proteins, including the association of tom40 with the receptor tom22 and small TOM proteins. Can associate with the SAM(core) complex as well as the mdm12-mmm1 complex, both involved in late steps of the major beta-barrel assembly pathway, that is responsible for biogenesis of all outer membrane beta-barrel proteins. May act as a switch that shuttles between both complexes and channels precursor proteins into the tom40-specific pathway. Plays a role in mitochondrial morphology and in the inheritance of mitochondria. The sequence is that of Mitochondrial distribution and morphology protein 10 (mdmB) from Aspergillus niger (strain ATCC MYA-4892 / CBS 513.88 / FGSC A1513).